A 544-amino-acid polypeptide reads, in one-letter code: Baeyer-Villiger monooxygenase (544 aa).

FAD contacts are provided by phenylalanine 27, glutamate 47, tryptophan 56, aspartate 67, tyrosine 73, and valine 119.

It belongs to the FAD-binding monooxygenase family. FAD is required as a cofactor.

Its function is as follows. Catalyzes a Baeyer-Villiger oxidation reaction, i.e. the insertion of an oxygen atom into a carbon-carbon bond adjacent to a carbonyl, which converts ketones to esters or lactones using NADPH as an electron donor. Besides cycloalkanones, can use cyclic alpha,beta-unsaturated ketones as substrates, leading to enol-lactones. Can also act on methylated cycloalkanones and methylated cycloalkenones with high enantioselectivity in some cases. The sequence is that of Baeyer-Villiger monooxygenase from Parvibaculum lavamentivorans (strain DS-1 / DSM 13023 / NCIMB 13966).